Reading from the N-terminus, the 264-residue chain is SPRY domain-containing SOCS box protein 2 (264 aa).

Residues 1–19 (MGQTALARGSSSTPTSQAL) are compositionally biased toward polar residues. Residues 1–34 (MGQTALARGSSSTPTSQALYSDFSPPEGLEELLS) form a disordered region. In terms of domain architecture, B30.2/SPRY spans 26 to 221 (PEGLEELLSA…VRIRYMGERR (196 aa)). An SOCS box domain is found at 222-264 (VEEPQSLLHLSRLCVRHALGDTRLGQISTLPLPPAMKRYLLYK).

Belongs to the SPSB family. In terms of assembly, component of the probable ECS(SPSB2) E3 ubiquitin-protein ligase complex which contains CUL5, RNF7/RBX2, Elongin BC complex and SPSB2. Interacts with CUL5, RNF7, ELOB and ELOC. Interacts with MET. Interacts (via B30.2/SPRY domain) with PAWR; this interaction occurs in association with the Elongin BC complex. Interacts with NOS2.

It localises to the cytoplasm. The protein localises to the cytosol. It functions in the pathway protein modification; protein ubiquitination. Its function is as follows. Substrate recognition component of a SCF-like ECS (Elongin BC-CUL2/5-SOCS-box protein) E3 ubiquitin-protein ligase complex which mediates the ubiquitination and subsequent proteasomal degradation of target proteins. Negatively regulates nitric oxide (NO) production and limits cellular toxicity in activated macrophages by mediating the ubiquitination and proteasomal degradation of NOS2. Acts as a bridge which links NOS2 with the ECS E3 ubiquitin ligase complex components ELOC and CUL5. The sequence is that of SPRY domain-containing SOCS box protein 2 (Spsb2) from Mus musculus (Mouse).